The primary structure comprises 212 residues: MNSFSTSAFGPVAFSLGLLLVLPAAFPAPVLPGEDSKNVAAPHSQPLTSSERIDKHIRYILDGISALRKETCNRSNMCESSKEALAENNLNLPKMAEKDGCFQSGFNEDTCLVKIITGLLEFEVYLEYLQNRFESSEEQARAVQMSTKVLIQFLQKKAKNLDAITTPEPTTNASLLTKLQAQNQWLQDMTTHLILRSFKEFLQSNLRALRQM.

The N-terminal stretch at Met1–Pro27 is a signal peptide. Cysteines 72 and 78 form a disulfide. A glycan (N-linked (GlcNAc...) asparagine) is linked at Asn73. Ser81 is subject to Phosphoserine. Cys101 and Cys111 are disulfide-bonded. A glycan (N-linked (GlcNAc...) asparagine) is linked at Asn172.

Belongs to the IL-6 superfamily. As to quaternary structure, component of a hexamer of two molecules each of IL6, IL6R and IL6ST; first binds to IL6R to associate with the signaling subunit IL6ST. Interacts with IL6R (via the N-terminal ectodomain); this interaction may be affected by IL6R-binding with SORL1, hence decreasing IL6 cis signaling. Interacts with SORL1 (via the N-terminal ectodomain); this interaction leads to IL6 internalization and lysosomal degradation. May form a trimeric complex with the soluble SORL1 ectodomain and soluble IL6R receptor; this interaction might stabilize circulating IL6, hence promoting IL6 trans signaling.

It is found in the secreted. Cytokine with a wide variety of biological functions in immunity, tissue regeneration, and metabolism. Binds to IL6R, then the complex associates to the signaling subunit IL6ST/gp130 to trigger the intracellular IL6-signaling pathway. The interaction with the membrane-bound IL6R and IL6ST stimulates 'classic signaling', whereas the binding of IL6 and soluble IL6R to IL6ST stimulates 'trans-signaling'. Alternatively, 'cluster signaling' occurs when membrane-bound IL6:IL6R complexes on transmitter cells activate IL6ST receptors on neighboring receiver cells. Functionally, IL6 is a potent inducer of the acute phase response. Rapid production of IL6 contributes to host defense during infection and tissue injury, but excessive IL6 synthesis is involved in disease pathology. In the innate immune response, is synthesized by myeloid cells, such as macrophages and dendritic cells, upon recognition of pathogens through toll-like receptors (TLRs) at the site of infection or tissue injury. In the adaptive immune response, is required for the differentiation of B cells into immunoglobulin-secreting cells. Plays a major role in the differentiation of CD4(+) T cell subsets. Essential factor for the development of T follicular helper (Tfh) cells that are required for the induction of germinal-center formation. Required to drive naive CD4(+) T cells to the Th17 lineage. Also required for proliferation of myeloma cells and the survival of plasmablast cells. Its function is as follows. Acts as an essential factor in bone homeostasis and on vessels directly or indirectly by induction of VEGF, resulting in increased angiogenesis activity and vascular permeability. Induces, through 'trans-signaling' and synergistically with IL1B and TNF, the production of VEGF. Involved in metabolic controls, is discharged into the bloodstream after muscle contraction increasing lipolysis and improving insulin resistance. 'Trans-signaling' in central nervous system also regulates energy and glucose homeostasis. Mediates, through GLP-1, crosstalk between insulin-sensitive tissues, intestinal L cells and pancreatic islets to adapt to changes in insulin demand. Also acts as a myokine. Plays a protective role during liver injury, being required for maintenance of tissue regeneration. Also has a pivotal role in iron metabolism by regulating HAMP/hepcidin expression upon inflammation or bacterial infection. Through activation of IL6ST-YAP-NOTCH pathway, induces inflammation-induced epithelial regeneration. The protein is Interleukin-6 (IL6) of Macaca mulatta (Rhesus macaque).